We begin with the raw amino-acid sequence, 449 residues long: Gamma-aminobutyric acid receptor subunit delta (449 aa).

An N-terminal signal peptide occupies residues 1–24 (MDVLGWLLLPLLLLCTQPHHGARA). Residues 25–251 (MNDIGDYVGS…QLRRNRGVYI (227 aa)) lie on the Extracellular side of the membrane. N-linked (GlcNAc...) asparagine glycosylation is found at Asn103 and Asn106. Residues Cys164 and Cys178 are joined by a disulfide bond. The chain crosses the membrane as a helical span at residues 252 to 271 (IQSYMPSVLLVAMSWVSFWI). At 272–275 (SQAA) the chain is on the cytoplasmic side. A helical membrane pass occupies residues 276-298 (VPARVSLGITTVLTMTTLMVSAR). The Extracellular segment spans residues 299–308 (SSLPRASAIK). A helical transmembrane segment spans residues 309 to 331 (ALDVYFWICYVFVFAALVEYAFA). Over 332 to 423 (HFNADYRKKR…SRLKPIDADT (92 aa)) the chain is Cytoplasmic. Ser390 carries the phosphoserine modification. Residues 424-446 (IDIYARAVFPAAFAAVNIIYWAA) traverse the membrane as a helical segment. The Extracellular segment spans residues 447-449 (YTM).

It belongs to the ligand-gated ion channel (TC 1.A.9) family. Gamma-aminobutyric acid receptor (TC 1.A.9.5) subfamily. GABRD sub-subfamily. Heteropentamer, formed by a combination of alpha (GABRA1-6), beta (GABRB1-3), gamma (GABRG1-3), delta (GABRD), epsilon (GABRE), rho (GABRR1-3), pi (GABRP) and theta (GABRQ) chains, each subunit exhibiting distinct physiological and pharmacological properties. Found in the brain, in cerebellar granule cells. Expressed in lungs, in alveolar epithelium.

It localises to the cell membrane. It carries out the reaction chloride(in) = chloride(out). Delta subunit of the heteropentameric ligand-gated chloride channel gated by gamma-aminobutyric acid (GABA), a major inhibitory neurotransmitter in the brain. GABA-gated chloride channels, also named GABA(A) receptors (GABAAR), consist of five subunits arranged around a central pore and contain GABA active binding site(s) located at the alpha and beta subunit interface(s). When activated by GABA, GABAARs selectively allow the flow of chloride anions across the cell membrane down their electrochemical gradient. GABAARs containing delta/GABRD subunits are predominantly expressed and located in extrasynaptic or perisynaptic positions on hippocampus and cerebellar granule cells, and contribute to the tonic GABAergic inhibition. GABAAR containing alpha-4-beta-3-delta subunits can simultaneously bind GABA and histamine where histamine binds at the interface of two neighboring beta subunits, which may be involved in the regulation of sleep and wakefulness. This chain is Gamma-aminobutyric acid receptor subunit delta, found in Rattus norvegicus (Rat).